The chain runs to 413 residues: F-box/kelch-repeat protein At5g26960 (413 aa).

In terms of domain architecture, F-box spans 41-90 (SATIASLPDDLLLECISRVPSSSIPSLAVVCRRWSRLLHSPYFLHLRRRL). 5 Kelch repeats span residues 96–141 (SLFA…YGSL), 152–191 (RVYVVSRNAVLRYDSWMGTLNLRSPMIFPRKKFAIAVVSG), 192–238 (KIYV…AVDG), 240–295 (FYVI…AAVG), and 367–413 (LLRR…CVEW).

The polypeptide is F-box/kelch-repeat protein At5g26960 (Arabidopsis thaliana (Mouse-ear cress)).